A 1133-amino-acid chain; its full sequence is Early transcription factor large subunit homolog (1133 aa).

In terms of domain architecture, Helicase ATP-binding spans lysine 52–glutamine 352. An ATP-binding site is contributed by tryptophan 99 to serine 106. The short motif at aspartate 281 to histidine 284 is the DEAH box element. The Helicase C-terminal domain occupies methionine 524–alanine 724.

It belongs to the DEAD box helicase family. DEAH subfamily.

Its subcellular location is the virion. It catalyses the reaction ATP + H2O = ADP + phosphate + H(+). Putative initation factor. The protein is Early transcription factor large subunit homolog of African swine fever virus (isolate Tick/South Africa/Pretoriuskop Pr4/1996) (ASFV).